The primary structure comprises 447 residues: MRRFFGTDGIRGVVNEDLTPELAYKLSRAIVGYFGNVKGKKVIIGSDTRNSKDMLKSALVAGFTSGGMNVLDVGVISTPALSYLVKNQDEVLLGVMISASHNPVEYNGIKIFKNDGFKLDDDVEAEIENYLLKEDNYYRANPREIGVIYDFSHIKEKYKNYLREIINGNFEGYKVMLDCAFGSLSEIAPEVFRELGAEVVAYNTKYNGLNINENCGAVYPETSKKLFLNSGAHIGFTYDGDGDRVIAFSENGEIIDGDIMLGILAKYLKEKGLLKGDKIVGTIMTNLGLEEYLKNINVELIRTKVGDRYVLDEILKYGLNLGGETSGHIILFDYMSTGDGLLTSLFLLKILKEKGVKLSELAKDIKIFPQVHEKVSVKGLNITEDMEKRFIEITEEVINGKNIRYIVRKSGTEPVVRITLEGDVPKEYLNELVLEIKSRIIDLLSNF.

Ser100 serves as the catalytic Phosphoserine intermediate. Residues Ser100, Asp239, Asp241, and Asp243 each coordinate Mg(2+). Position 100 is a phosphoserine (Ser100).

This sequence belongs to the phosphohexose mutase family. Mg(2+) is required as a cofactor. Post-translationally, activated by phosphorylation.

The enzyme catalyses alpha-D-glucosamine 1-phosphate = D-glucosamine 6-phosphate. In terms of biological role, catalyzes the conversion of glucosamine-6-phosphate to glucosamine-1-phosphate. This chain is Phosphoglucosamine mutase, found in Dictyoglomus turgidum (strain DSM 6724 / Z-1310).